Reading from the N-terminus, the 153-residue chain is D-aminoacyl-tRNA deacylase (153 aa).

The short motif at 142 to 143 (GP) is the Gly-cisPro motif, important for rejection of L-amino acids element.

This sequence belongs to the DTD family. In terms of assembly, homodimer.

It is found in the cytoplasm. It catalyses the reaction glycyl-tRNA(Ala) + H2O = tRNA(Ala) + glycine + H(+). The enzyme catalyses a D-aminoacyl-tRNA + H2O = a tRNA + a D-alpha-amino acid + H(+). An aminoacyl-tRNA editing enzyme that deacylates mischarged D-aminoacyl-tRNAs. Also deacylates mischarged glycyl-tRNA(Ala), protecting cells against glycine mischarging by AlaRS. Acts via tRNA-based rather than protein-based catalysis; rejects L-amino acids rather than detecting D-amino acids in the active site. By recycling D-aminoacyl-tRNA to D-amino acids and free tRNA molecules, this enzyme counteracts the toxicity associated with the formation of D-aminoacyl-tRNA entities in vivo and helps enforce protein L-homochirality. The chain is D-aminoacyl-tRNA deacylase from Acidovorax ebreus (strain TPSY) (Diaphorobacter sp. (strain TPSY)).